The chain runs to 397 residues: Cysteine protease ATG4A (397 aa).

Residue cysteine 79 is the Nucleophile of the active site. Active-site residues include aspartate 279 and histidine 281. An LIR motif is present at residues 392-395; it reads FEIL.

It belongs to the peptidase C54 family.

The protein resides in the cytoplasm. It catalyses the reaction [protein]-C-terminal L-amino acid-glycyl-phosphatidylethanolamide + H2O = [protein]-C-terminal L-amino acid-glycine + a 1,2-diacyl-sn-glycero-3-phosphoethanolamine. Its function is as follows. Cysteine protease that plays a key role in autophagy by mediating both proteolytic activation and delipidation of ATG8 family proteins. The protease activity is required for proteolytic activation of ATG8 family proteins: cleaves the C-terminal amino acid of ATG8 proteins to reveal a C-terminal glycine. Exposure of the glycine at the C-terminus is essential for ATG8 proteins conjugation to phosphatidylethanolamine (PE) and insertion to membranes, which is necessary for autophagy. Protease activity is also required to counteract formation of high-molecular weight conjugates of ATG8 proteins (ATG8ylation): acts as a deubiquitinating-like enzyme that removes ATG8 conjugated to other proteins, such as ATG3. In addition to the protease activity, also mediates delipidation of ATG8 family proteins. Catalyzes delipidation of PE-conjugated forms of ATG8 proteins during macroautophagy. This is Cysteine protease ATG4A from Xenopus laevis (African clawed frog).